Reading from the N-terminus, the 305-residue chain is Tyrosine recombinase XerD (305 aa).

Residues 1 to 83 enclose the Core-binding (CB) domain; sequence MEFISQFLEM…TIKSYYEFLI (83 aa). The region spanning 104-298 is the Tyr recombinase domain; the sequence is KLPEILSIDD…QTNHLKKALL (195 aa). Active-site residues include Arg145, Lys175, His250, Arg253, and His276. The active-site O-(3'-phospho-DNA)-tyrosine intermediate is Tyr285.

The protein belongs to the 'phage' integrase family. XerD subfamily. As to quaternary structure, forms a cyclic heterotetrameric complex composed of two molecules of XerC and two molecules of XerD.

The protein resides in the cytoplasm. Site-specific tyrosine recombinase, which acts by catalyzing the cutting and rejoining of the recombining DNA molecules. The XerC-XerD complex is essential to convert dimers of the bacterial chromosome into monomers to permit their segregation at cell division. It also contributes to the segregational stability of plasmids. The sequence is that of Tyrosine recombinase XerD from Rickettsia bellii (strain RML369-C).